The following is a 240-amino-acid chain: Glutathione S-transferase theta-1 (240 aa).

Positions 2–82 constitute a GST N-terminal domain; that stretch reads GLELYLDLLS…YLTRKYKVPD (81 aa). Residues His-40, 53–54, and 66–67 each bind glutathione; these read KV and ES. In terms of domain architecture, GST C-terminal spans 88-220; sequence DLQARARVDE…HEVILKAKDF (133 aa).

Belongs to the GST superfamily. Theta family. In terms of assembly, homodimer. Found in erythrocyte. Expressed at low levels in liver. In lung, expressed at low levels in club cells and ciliated cells at the alveolar/bronchiolar junction. Absent from epithelial cells of larger bronchioles.

The protein resides in the cytoplasm. It carries out the reaction RX + glutathione = an S-substituted glutathione + a halide anion + H(+). Its function is as follows. Conjugation of reduced glutathione to a wide number of exogenous and endogenous hydrophobic electrophiles. Acts on 1,2-epoxy-3-(4-nitrophenoxy)propane, phenethylisothiocyanate 4-nitrobenzyl chloride and 4-nitrophenethyl bromide. Displays glutathione peroxidase activity with cumene hydroperoxide. The chain is Glutathione S-transferase theta-1 (GSTT1) from Homo sapiens (Human).